Here is a 232-residue protein sequence, read N- to C-terminus: Adenosylcobinamide-GDP ribazoletransferase (232 aa).

Transmembrane regions (helical) follow at residues 24-44 (LWAFPLVSLVSSIIPIAILYL), 46-66 (IPLANVLALLSLYFVIGLLHL), 96-116 (IAGVFAVVVVLFLQVYSLSML), 117-137 (PFYAIYIAELNSKFSMLLGLA), 153-173 (GMNGRQLAIGVVLYVLLYLPV), 174-194 (VIYDPSALFGVMGLVFAWYVI), and 210-230 (GAMAEITRAGTLVILSFSLCF).

Belongs to the CobS family. Mg(2+) is required as a cofactor.

The protein resides in the cell membrane. The enzyme catalyses alpha-ribazole + adenosylcob(III)inamide-GDP = adenosylcob(III)alamin + GMP + H(+). It carries out the reaction alpha-ribazole 5'-phosphate + adenosylcob(III)inamide-GDP = adenosylcob(III)alamin 5'-phosphate + GMP + H(+). Its pathway is cofactor biosynthesis; adenosylcobalamin biosynthesis; adenosylcobalamin from cob(II)yrinate a,c-diamide: step 7/7. Joins adenosylcobinamide-GDP and alpha-ribazole to generate adenosylcobalamin (Ado-cobalamin). Also synthesizes adenosylcobalamin 5'-phosphate from adenosylcobinamide-GDP and alpha-ribazole 5'-phosphate. The protein is Adenosylcobinamide-GDP ribazoletransferase of Pyrococcus abyssi (strain GE5 / Orsay).